Consider the following 356-residue polypeptide: Histidinol-phosphate aminotransferase (356 aa).

N6-(pyridoxal phosphate)lysine is present on Lys210.

It belongs to the class-II pyridoxal-phosphate-dependent aminotransferase family. Histidinol-phosphate aminotransferase subfamily. Homodimer. Pyridoxal 5'-phosphate is required as a cofactor.

It carries out the reaction L-histidinol phosphate + 2-oxoglutarate = 3-(imidazol-4-yl)-2-oxopropyl phosphate + L-glutamate. The protein operates within amino-acid biosynthesis; L-histidine biosynthesis; L-histidine from 5-phospho-alpha-D-ribose 1-diphosphate: step 7/9. This chain is Histidinol-phosphate aminotransferase (hisC), found in Acetobacter pasteurianus (Acetobacter turbidans).